A 261-amino-acid chain; its full sequence is Urease accessory protein UreD (261 aa).

It belongs to the UreD family. UreD, UreF and UreG form a complex that acts as a GTP-hydrolysis-dependent molecular chaperone, activating the urease apoprotein by helping to assemble the nickel containing metallocenter of UreC. The UreE protein probably delivers the nickel.

Its subcellular location is the cytoplasm. Functionally, required for maturation of urease via the functional incorporation of the urease nickel metallocenter. This Haemophilus influenzae (strain ATCC 51907 / DSM 11121 / KW20 / Rd) protein is Urease accessory protein UreD.